Here is a 30-residue protein sequence, read N- to C-terminus: Cyclotide hyen-L (30 aa).

The cyclopeptide (Gly-Asn) cross-link spans glycine 1–asparagine 30. Cystine bridges form between cysteine 4/cysteine 21, cysteine 8/cysteine 23, and cysteine 13/cysteine 28.

This is a cyclic peptide. As to expression, detected in stems (at protein level).

In terms of biological role, probably participates in a plant defense mechanism. Has cytotoxic activity against HUVEC cells (LC(50)= 2.26 uM) and various cancer cells including HeLa (LC(50)= 3.48 uM), MCF-7 and K562. Displays very weak hemolytic activity. Binds to and induces leakage in phospholipd membranes, particularly ones containing 1-palmitoyl-2-oleophosphatidylethanolamine (POPE). This is Cyclotide hyen-L from Pigea enneasperma (Spade flower).